Consider the following 216-residue polypeptide: Pyridoxine/pyridoxamine 5'-phosphate oxidase (216 aa).

Residues 12–15 (RKSY) and Lys-70 contribute to the substrate site. FMN is bound by residues 65–70 (RVVLVK), 80–81 (FT), Arg-86, and Lys-87. Substrate-binding residues include Tyr-127, Arg-131, and Ser-135. Residues 144–145 (QS) and Trp-188 each bind FMN. 194–196 (RLH) provides a ligand contact to substrate. Residue Arg-198 coordinates FMN.

This sequence belongs to the pyridoxamine 5'-phosphate oxidase family. In terms of assembly, homodimer. It depends on FMN as a cofactor.

It carries out the reaction pyridoxamine 5'-phosphate + O2 + H2O = pyridoxal 5'-phosphate + H2O2 + NH4(+). It catalyses the reaction pyridoxine 5'-phosphate + O2 = pyridoxal 5'-phosphate + H2O2. The protein operates within cofactor metabolism; pyridoxal 5'-phosphate salvage; pyridoxal 5'-phosphate from pyridoxamine 5'-phosphate: step 1/1. It participates in cofactor metabolism; pyridoxal 5'-phosphate salvage; pyridoxal 5'-phosphate from pyridoxine 5'-phosphate: step 1/1. Its function is as follows. Catalyzes the oxidation of either pyridoxine 5'-phosphate (PNP) or pyridoxamine 5'-phosphate (PMP) into pyridoxal 5'-phosphate (PLP). The protein is Pyridoxine/pyridoxamine 5'-phosphate oxidase of Polaromonas sp. (strain JS666 / ATCC BAA-500).